A 547-amino-acid chain; its full sequence is Chaperonin GroEL 2 (547 aa).

Residues 30 to 33, K51, 87 to 91, G415, 479 to 481, and D495 contribute to the ATP site; these read TLGP, DGTTT, and NAA. A disordered region spans residues 525–547; it reads PKEESAAPAGGGMGGMGGMGGMM. The segment covering 533–547 has biased composition (gly residues); the sequence is AGGGMGGMGGMGGMM.

Belongs to the chaperonin (HSP60) family. Forms a cylinder of 14 subunits composed of two heptameric rings stacked back-to-back. Interacts with the co-chaperonin GroES.

Its subcellular location is the cytoplasm. It carries out the reaction ATP + H2O + a folded polypeptide = ADP + phosphate + an unfolded polypeptide.. Its function is as follows. Together with its co-chaperonin GroES, plays an essential role in assisting protein folding. The GroEL-GroES system forms a nano-cage that allows encapsulation of the non-native substrate proteins and provides a physical environment optimized to promote and accelerate protein folding. The chain is Chaperonin GroEL 2 from Anaeromyxobacter dehalogenans (strain 2CP-C).